Reading from the N-terminus, the 321-residue chain is Tetraacyldisaccharide 4'-kinase (321 aa).

54–61 (SVGGTGKT) lines the ATP pocket.

Belongs to the LpxK family.

It catalyses the reaction a lipid A disaccharide + ATP = a lipid IVA + ADP + H(+). The protein operates within glycolipid biosynthesis; lipid IV(A) biosynthesis; lipid IV(A) from (3R)-3-hydroxytetradecanoyl-[acyl-carrier-protein] and UDP-N-acetyl-alpha-D-glucosamine: step 6/6. Functionally, transfers the gamma-phosphate of ATP to the 4'-position of a tetraacyldisaccharide 1-phosphate intermediate (termed DS-1-P) to form tetraacyldisaccharide 1,4'-bis-phosphate (lipid IVA). This chain is Tetraacyldisaccharide 4'-kinase, found in Rickettsia peacockii (strain Rustic).